The chain runs to 130 residues: Small ribosomal subunit protein uS9 (130 aa).

This sequence belongs to the universal ribosomal protein uS9 family.

The protein is Small ribosomal subunit protein uS9 (rpsI) of Haemophilus influenzae (strain ATCC 51907 / DSM 11121 / KW20 / Rd).